A 498-amino-acid polypeptide reads, in one-letter code: ATP synthase subunit beta, chloroplastic (498 aa).

172–179 (GGAGVGKT) contacts ATP.

It belongs to the ATPase alpha/beta chains family. In terms of assembly, F-type ATPases have 2 components, CF(1) - the catalytic core - and CF(0) - the membrane proton channel. CF(1) has five subunits: alpha(3), beta(3), gamma(1), delta(1), epsilon(1). CF(0) has four main subunits: a(1), b(1), b'(1) and c(9-12).

The protein localises to the plastid. The protein resides in the chloroplast thylakoid membrane. It catalyses the reaction ATP + H2O + 4 H(+)(in) = ADP + phosphate + 5 H(+)(out). Functionally, produces ATP from ADP in the presence of a proton gradient across the membrane. The catalytic sites are hosted primarily by the beta subunits. The protein is ATP synthase subunit beta, chloroplastic of Chamaerops humilis (Mediterranean fan palm).